Consider the following 569-residue polypeptide: Alpha-keto-acid decarboxylase (569 aa).

Position 57 (glutamate 57) interacts with thiamine diphosphate. The thiamine pyrophosphate binding stretch occupies residues 392 to 474 (TAFYGMVEHR…VVVNNDGYTI (83 aa)). Residues aspartate 442, asparagine 469, and glycine 471 each coordinate Mg(2+).

Belongs to the TPP enzyme family. Requires a metal cation as cofactor. Thiamine diphosphate serves as cofactor.

Decarboxylates branched-chain and aromatic alpha-keto acids to aldehydes. The sequence is that of Alpha-keto-acid decarboxylase (kdc) from Mycobacterium leprae (strain TN).